A 562-amino-acid polypeptide reads, in one-letter code: Dihydroxy-acid dehydratase (562 aa).

Asp80 contributes to the Mg(2+) binding site. Cys121 is a [2Fe-2S] cluster binding site. Positions 122 and 123 each coordinate Mg(2+). Lys123 bears the N6-carboxylysine mark. Cys194 lines the [2Fe-2S] cluster pocket. Position 446 (Glu446) interacts with Mg(2+). Ser472 serves as the catalytic Proton acceptor.

This sequence belongs to the IlvD/Edd family. As to quaternary structure, homodimer. The cofactor is [2Fe-2S] cluster. Mg(2+) is required as a cofactor.

It catalyses the reaction (2R)-2,3-dihydroxy-3-methylbutanoate = 3-methyl-2-oxobutanoate + H2O. The catalysed reaction is (2R,3R)-2,3-dihydroxy-3-methylpentanoate = (S)-3-methyl-2-oxopentanoate + H2O. The protein operates within amino-acid biosynthesis; L-isoleucine biosynthesis; L-isoleucine from 2-oxobutanoate: step 3/4. It functions in the pathway amino-acid biosynthesis; L-valine biosynthesis; L-valine from pyruvate: step 3/4. Functionally, functions in the biosynthesis of branched-chain amino acids. Catalyzes the dehydration of (2R,3R)-2,3-dihydroxy-3-methylpentanoate (2,3-dihydroxy-3-methylvalerate) into 2-oxo-3-methylpentanoate (2-oxo-3-methylvalerate) and of (2R)-2,3-dihydroxy-3-methylbutanoate (2,3-dihydroxyisovalerate) into 2-oxo-3-methylbutanoate (2-oxoisovalerate), the penultimate precursor to L-isoleucine and L-valine, respectively. The protein is Dihydroxy-acid dehydratase of Staphylococcus aureus (strain bovine RF122 / ET3-1).